The following is a 528-amino-acid chain: Folylpolyglutamate synthase (528 aa).

ATP is bound at residue 104–107; it reads GKGG. Positions 134, 208, and 236 each coordinate Mg(2+). ATP-binding residues include R351 and D365.

It belongs to the folylpolyglutamate synthase family. A monovalent cation is required as a cofactor.

The protein localises to the mitochondrion inner membrane. The protein resides in the mitochondrion matrix. Its subcellular location is the cytoplasm. It carries out the reaction (6S)-5,6,7,8-tetrahydrofolyl-(gamma-L-Glu)(n) + L-glutamate + ATP = (6S)-5,6,7,8-tetrahydrofolyl-(gamma-L-Glu)(n+1) + ADP + phosphate + H(+). It functions in the pathway cofactor biosynthesis; tetrahydrofolylpolyglutamate biosynthesis. Functionally, catalyzes conversion of folates to polyglutamate derivatives allowing concentration of folate compounds in the cell and the intracellular retention of these cofactors, which are important substrates for most of the folate-dependent enzymes that are involved in one-carbon transfer reactions involved in purine, pyrimidine and amino acid synthesis. The protein is Folylpolyglutamate synthase (met-6) of Neurospora crassa (strain ATCC 24698 / 74-OR23-1A / CBS 708.71 / DSM 1257 / FGSC 987).